We begin with the raw amino-acid sequence, 662 residues long: Transforming growth factor beta activator LRRC32 (662 aa).

Positions 1 to 17 (MRPQILLLLALLTLGLA) are cleaved as a signal peptide. At 18–625 (AQRQDKVPCK…EDCEKGGLKN (608 aa)) the chain is on the extracellular side. The LRRNT domain maps to 21-48 (QDKVPCKMVDKKVSCQGLGLLQVPSVLP). LRR repeat units follow at residues 50 to 73 (DTETLDLSGNQLRSILASPLGFYT), 74 to 95 (ALRHLDLSTNEISFLQPGAFQA), 98 to 119 (HLEHLSLAHNRLAMATALSAGG), 125 to 145 (RVTSLDLSGNSLYSGLLERLL), 150 to 171 (SLHTLSLAENSLTRLTRHTFRD), 174 to 195 (VLEQLDLHSNVLMDIEDGAFEG), 198 to 219 (RLTHLNLSRNSLTCISDFSLQQ), 220 to 240 (LRVLDLSCNSIEAFQTASQPQ), 244 to 265 (QLTWLDLRENKLLHFPDLAALP), and 266 to 286 (RLIYLNLSNNLIRLPTGPPQD). An N-linked (GlcNAc...) asparagine glycan is attached at Asn-203. Residues Asn-271 and Asn-308 are each glycosylated (N-linked (GlcNAc...) asparagine). 10 LRR repeats span residues 316–339 (QLLNLDLSYNEIELIPDSFLEHLT), 340–361 (SLCFLNLSRNCLRTFEARRSGS), 364–385 (CLMLLDLSHNALETLELGARAL), 387–408 (SLRTLLLQGNALRDLPPYTFAN), 411–432 (SLQRLNLQGNRVSPCGGPDEPG), 444–465 (SLHSLSLVDNEIELLRAGAFLH), 467–488 (PLTELDLSSNPGLEVATGALGG), 492–513 (SLEVLALQGNGLTVLQVDLPCF), 515–536 (CLKRLNLAENRLSHLPAWTQAV), and 537–558 (SLEVLDLRNNSFSLLPGSAMGG). Asn-345 carries an N-linked (GlcNAc...) asparagine glycan. N-linked (GlcNAc...) asparagine glycosylation is present at Asn-545. Residues 571–620 (NPLSCCGNGWLAAQLHQGRVDVDATQDLICRFSSQEEVSLSHVRPEDCEK) form the LRRCT domain. A helical membrane pass occupies residues 626–646 (INLIIILTFILVSAILLTTLA). Topologically, residues 647–662 (TCCCVRRQKFNQQYKA) are cytoplasmic.

The protein belongs to the LRRC32/LRRC33 family. As to quaternary structure, interacts with TGFB1; associates via disulfide bonds with the Latency-associated peptide chain (LAP) regulatory chain of TGFB1, leading to regulate activation of TGF-beta-1. Interacts with TGFB2. Interacts with TGFB3; associates via disulfide bonds with the Latency-associated peptide chain (LAP) regulatory chain of TGFB3, leading to regulate activation of TGF-beta-3. Interacts with LAPTM4B; decreases TGFB1 production in regulatory T-cells.

Its subcellular location is the cell membrane. The protein localises to the cell surface. In terms of biological role, key regulator of transforming growth factor beta (TGFB1, TGFB2 and TGFB3) that controls TGF-beta activation by maintaining it in a latent state during storage in extracellular space. Associates specifically via disulfide bonds with the Latency-associated peptide (LAP), which is the regulatory chain of TGF-beta, and regulates integrin-dependent activation of TGF-beta. Able to outcompete LTBP1 for binding to LAP regulatory chain of TGF-beta. Controls activation of TGF-beta-1 (TGFB1) on the surface of activated regulatory T-cells (Tregs). Required for epithelial fusion during palate development by regulating activation of TGF-beta-3 (TGFB3). This is Transforming growth factor beta activator LRRC32 from Pongo abelii (Sumatran orangutan).